A 233-amino-acid polypeptide reads, in one-letter code: Nickel import system ATP-binding protein NikE (233 aa).

The region spanning 2–228 (IELKHVTFGY…DRHPYTKELV (227 aa)) is the ABC transporter domain. Residue 35–42 (GESGCGKS) coordinates ATP.

Belongs to the ABC transporter superfamily. In terms of assembly, the complex is composed of two ATP-binding proteins (NikD and NikE), two transmembrane proteins (NikB and NikC) and a solute-binding protein (NikA).

The protein localises to the cell membrane. It carries out the reaction Ni(2+)(out) + ATP + H2O = Ni(2+)(in) + ADP + phosphate + H(+). Its function is as follows. Part of the ABC transporter complex NikABCDE (Opp2) involved in nickel import. Probably responsible for energy coupling to the transport system. The polypeptide is Nickel import system ATP-binding protein NikE (Staphylococcus aureus (strain USA300)).